A 119-amino-acid polypeptide reads, in one-letter code: Large ribosomal subunit protein bL19 (119 aa).

The protein belongs to the bacterial ribosomal protein bL19 family.

Functionally, this protein is located at the 30S-50S ribosomal subunit interface and may play a role in the structure and function of the aminoacyl-tRNA binding site. The sequence is that of Large ribosomal subunit protein bL19 from Leuconostoc citreum (strain KM20).